Reading from the N-terminus, the 480-residue chain is Zinc metalloproteinase/disintegrin (480 aa).

Positions 1 to 20 (MIQVLLITICLAVFPFQGSS) are cleaved as a signal peptide. Residues 21–190 (IVLDSGNLNE…KASQLNVSPD (170 aa)) constitute a propeptide that is removed on maturation. The Peptidase M12B domain maps to 197–391 (RFIKLAIYVD…HSPQCILNDP (195 aa)). N-linked (GlcNAc...) asparagine glycosylation is found at N259 and N279. Cystine bridges form between C308/C386, C348/C370, C350/C353, C413/C428, C415/C423, C422/C445, C436/C442, C441/C466, and C454/C473. H333 contacts Zn(2+). Residue E334 is part of the active site. Zn(2+) contacts are provided by H337 and H343. Positions 399–480 (TPVSGNELLE…AGCPRNPFHA (82 aa)) constitute a Disintegrin domain. A Cell attachment site motif is present at residues 458 to 460 (RGD).

The protein belongs to the venom metalloproteinase (M12B) family. P-II subfamily. P-IIa sub-subfamily. In terms of assembly, monomer. Requires Zn(2+) as cofactor. As to expression, expressed by the venom gland.

The protein resides in the secreted. Its function is as follows. Impairs hemostasis in the envenomed animal. Functionally, inhibits platelet aggregation and bone resorption. In Gloydius halys (Chinese water mocassin), this protein is Zinc metalloproteinase/disintegrin.